A 457-amino-acid chain; its full sequence is Multidrug resistance protein MdtK (457 aa).

The next 12 membrane-spanning stretches (helical) occupy residues L11–V31, I53–A73, W93–I113, A127–A147, G160–Y180, L188–M208, L243–V263, I276–T296, A314–V334, L357–I377, I387–A407, and P418–L438.

Belongs to the multi antimicrobial extrusion (MATE) (TC 2.A.66.1) family. MdtK subfamily.

It localises to the cell inner membrane. Multidrug efflux pump that functions probably as a Na(+)/drug antiporter. This is Multidrug resistance protein MdtK from Citrobacter koseri (strain ATCC BAA-895 / CDC 4225-83 / SGSC4696).